We begin with the raw amino-acid sequence, 267 residues long: FCS-Like Zinc finger 8 (267 aa).

2 disordered regions span residues 1–29 (MLKK…KTTP) and 124–156 (DSPI…GSPR). Polar residues-rich tracts occupy residues 15 to 28 (ETNQ…SKTT) and 126 to 141 (PISS…NSQP). The segment at 221-265 (SFLSCCCNCKKSLGPRDDIFMYRGDRAFCSSECRSIEMMMSEEND) adopts an FLZ-type zinc-finger fold.

It belongs to the FLZ family. Interacts with KIN10 and KIN11 via its FLZ-type zinc finger domain. Interacts with KINB1, KINB2, KINB3 and SNF4 via its N-terminal part. Interacts with HB21/ZHD3.

May act as an adapter to facilitate the interaction of SnRK1 complex with effector proteins, conferring tissue- and stimulus-type specific differences in the SnRK1 regulation pathway. This is FCS-Like Zinc finger 8 from Arabidopsis thaliana (Mouse-ear cress).